A 123-amino-acid polypeptide reads, in one-letter code: uncharacterized protein (123 aa).

The span at 31 to 57 (KLRTEAKKSKDKERTKEKEKHESLAKE) shows a compositional bias: basic and acidic residues. Residues 31–58 (KLRTEAKKSKDKERTKEKEKHESLAKEK) form a disordered region. Residues 91-111 (IIIFLLILLVSGLMVGIFFGI) traverse the membrane as a helical segment.

The protein resides in the membrane. This is an uncharacterized protein from Mycoplasma genitalium (strain ATCC 33530 / DSM 19775 / NCTC 10195 / G37) (Mycoplasmoides genitalium).